The following is a 303-amino-acid chain: Mitochondrial substrate carrier family protein E (303 aa).

The Mitochondrial intermembrane portion of the chain corresponds to 1 to 8 (MENKKESS). 3 Solcar repeats span residues 6 to 93 (ESSL…SKQW), 104 to 197 (ESTI…CKST), and 210 to 298 (LPIP…LKYL). Residues 9–29 (LLYILTGATSGLLADSIMHPV) form a helical membrane-spanning segment. Over 30-67 (DTVRARVQIEKVGKSQYKGTFNALNQIIKNEGVSYLYK) the chain is Mitochondrial matrix. The helical transmembrane segment at 68-88 (GFPIVATATVPAHALYFLGYE) threads the bilayer. Topologically, residues 89-109 (YSKQWVTDRYGKKWGESTITH) are mitochondrial intermembrane. Residues 110–130 (FSAGFVADALGSLIWVPMDII) form a helical membrane-spanning segment. The Mitochondrial matrix portion of the chain corresponds to 131-171 (KQRLQVQTNTQKLNPNQTYYKGSFHAGKIILQEEGIRGLYR). A helical membrane pass occupies residues 172-192 (GFMPALATYGPFVGIYFSVYE). The Mitochondrial intermembrane portion of the chain corresponds to 193-215 (KCKSTISSLLSKEKDQYLPIPYQ). The chain crosses the membrane as a helical span at residues 216-236 (LGSGFFAGAFAAAVTCPLDVI). Residues 237 to 268 (KTRIQVQRSTEKQIYKGMWDSFKTILKEEGPK) lie on the Mitochondrial matrix side of the membrane. A helical transmembrane segment spans residues 269–289 (AFVKGMGARIWWIAPGNALTI). The Mitochondrial intermembrane segment spans residues 290–303 (ASYEQLKYLFKDLI).

The protein belongs to the mitochondrial carrier (TC 2.A.29) family.

The protein localises to the mitochondrion inner membrane. Functionally, mitochondrial solute carriers shuttle metabolites, nucleotides, and cofactors through the mitochondrial inner membrane. In Dictyostelium discoideum (Social amoeba), this protein is Mitochondrial substrate carrier family protein E (mcfE).